We begin with the raw amino-acid sequence, 93 residues long: Peptide YY-like (93 aa).

An N-terminal signal peptide occupies residues 1-27; it reads MVSPRVRLAALALSVCAILCLGMHASA. The residue at position 63 (Y63) is a Tyrosine amide. Positions 65-93 are cleaved as a propeptide — C-terminal extension; the sequence is KRALTPENWIYRDPAEERVTYGLDDYAMW.

It belongs to the NPY family. Gut and medial reticulospinal neuron system in the brainstem.

Its subcellular location is the secreted. Gastrointestinal hormone and neuropeptide. In Lampetra fluviatilis (European river lamprey), this protein is Peptide YY-like (pyy).